The primary structure comprises 291 residues: Protease HtpX homolog (291 aa).

2 consecutive transmembrane segments (helical) span residues 4–24 and 38–58; these read VILF…TARI and MGML…ISLL. His144 provides a ligand contact to Zn(2+). Residue Glu145 is part of the active site. His148 is a Zn(2+) binding site. A run of 2 helical transmembrane segments spans residues 159–179 and 199–219; these read LIQG…AYAV and ISSI…VMFF. Glu224 contributes to the Zn(2+) binding site.

Belongs to the peptidase M48B family. Zn(2+) is required as a cofactor.

The protein resides in the cell inner membrane. The protein is Protease HtpX homolog of Pelodictyon phaeoclathratiforme (strain DSM 5477 / BU-1).